The chain runs to 415 residues: 2-oxoadipate dioxygenase/decarboxylase (415 aa).

2-oxoadipate contacts are provided by H66, R70, and H225. Residue H66 participates in Fe(2+) binding. The Fe(2+) site is built by H225 and E296. A361 provides a ligand contact to 2-oxoadipate.

Belongs to the 2-oxoadipate dioxygenase/decarboxylase family. Fe(2+) is required as a cofactor.

It carries out the reaction 2-oxoadipate + O2 = (R)-2-hydroxyglutarate + CO2. Functionally, catalyzes the decarboxylation and hydroxylation of 2-oxoadipate (2OA) to form D-2-hydroxyglutarate (D-2-HGA). In Mycobacterium bovis (strain ATCC BAA-935 / AF2122/97), this protein is 2-oxoadipate dioxygenase/decarboxylase.